We begin with the raw amino-acid sequence, 208 residues long: Photosystem I reaction center subunit II-1, chloroplastic (208 aa).

Residues 1–45 (MATQAAGIFNSAITTAATSGVKKLHFFSTTHRPKSLSFTKTAIRA) constitute a chloroplast transit peptide. Thr-48 carries the post-translational modification Phosphothreonine. The interval 49–72 (DSSAAAAAAPATKEAPVGFTPPQL) is disordered. Residues 50–64 (SSAAAAAAPATKEAP) are compositionally biased toward low complexity. The segment at 141-149 (RLRSKYKIT) is ferredoxin and ferredoxin-oxidoreductase binding.

Belongs to the PsaD family. As to quaternary structure, interacts with PGRL1A and PGRL1B. Phosphorylated by a threonine specific thylakoid kinase in a light activated and redox-dependent manner.

It is found in the plastid. It localises to the chloroplast thylakoid membrane. Functionally, psaD can form complexes with ferredoxin and ferredoxin-oxidoreductase in photosystem I (PS I) reaction center. PSAD may encode the ferredoxin-docking protein. The polypeptide is Photosystem I reaction center subunit II-1, chloroplastic (psaD1) (Arabidopsis thaliana (Mouse-ear cress)).